The primary structure comprises 359 residues: Protein PAM71-homolog, chloroplastic (359 aa).

The transit peptide at 1–66 directs the protein to the chloroplast; that stretch reads MKLTSLSKNA…DLLWGKFRVR (66 aa). A disordered region spans residues 71 to 102; it reads GVGSGSYSGGEEDGSQSSSLDQSPATSSESLK. Low complexity predominate over residues 85–98; the sequence is SQSSSLDQSPATSS. The next 7 helical transmembrane spans lie at 110-130, 149-169, 177-197, 207-227, 269-289, 311-331, and 339-359; these read SLSIALVLLSCGLVFSLITFV, AFSLIFVSEIGDKTFFIAALL, LVLLGSMGALSLMTILSVVIG, FQTTLPIGEYAAIALLMFFGL, LTNPLEILWKSFSLVFFAEWG, GAIAGHLVATVLAIMGGAFLA, and VGYVGGALFLVFAAATFFGVF.

This sequence belongs to the GDT1 family.

The protein localises to the plastid. Its subcellular location is the chloroplast membrane. In terms of biological role, probable chloroplast-localized Mn(2+)/H(+) and/or Ca(2+)/H(+) antiporter regulating Ca(2+), Mn(2+) and pH homeostasis. The protein is Protein PAM71-homolog, chloroplastic of Arabidopsis thaliana (Mouse-ear cress).